We begin with the raw amino-acid sequence, 369 residues long: Protein-glutamate methylesterase/protein-glutamine glutaminase (369 aa).

Positions 6–122 (RAVVADDSHF…SMEMSRLKDQ (117 aa)) constitute a Response regulatory domain. Aspartate 56 carries the 4-aspartylphosphate modification. The interval 136–178 (GATGSRSGTGSDSGTAPTTAGGSATDRRGTGGSSGQTTYVANP) is disordered. Over residues 138-159 (TGSRSGTGSDSGTAPTTAGGSA) the composition is skewed to low complexity. Residues 173 to 367 (TYVANPTLVI…DGVIDTITTE (195 aa)) form the CheB-type methylesterase domain. Catalysis depends on residues serine 185, histidine 212, and aspartate 309.

It belongs to the CheB family. Phosphorylated by CheA. Phosphorylation of the N-terminal regulatory domain activates the methylesterase activity.

It is found in the cytoplasm. It catalyses the reaction [protein]-L-glutamate 5-O-methyl ester + H2O = L-glutamyl-[protein] + methanol + H(+). The catalysed reaction is L-glutaminyl-[protein] + H2O = L-glutamyl-[protein] + NH4(+). In terms of biological role, involved in chemotaxis. Part of a chemotaxis signal transduction system that modulates chemotaxis in response to various stimuli. Catalyzes the demethylation of specific methylglutamate residues introduced into the chemoreceptors (methyl-accepting chemotaxis proteins or MCP) by CheR. Also mediates the irreversible deamidation of specific glutamine residues to glutamic acid. The sequence is that of Protein-glutamate methylesterase/protein-glutamine glutaminase from Haloarcula marismortui (strain ATCC 43049 / DSM 3752 / JCM 8966 / VKM B-1809) (Halobacterium marismortui).